The primary structure comprises 293 residues: 33 kDa chaperonin (293 aa).

2 disulfide bridges follow: Cys-238–Cys-240 and Cys-271–Cys-274.

It belongs to the HSP33 family. In terms of processing, under oxidizing conditions two disulfide bonds are formed involving the reactive cysteines. Under reducing conditions zinc is bound to the reactive cysteines and the protein is inactive.

It is found in the cytoplasm. Its function is as follows. Redox regulated molecular chaperone. Protects both thermally unfolding and oxidatively damaged proteins from irreversible aggregation. Plays an important role in the bacterial defense system toward oxidative stress. The sequence is that of 33 kDa chaperonin from Staphylococcus aureus (strain Mu3 / ATCC 700698).